We begin with the raw amino-acid sequence, 211 residues long: Superoxide dismutase [Fe] (211 aa).

4 residues coordinate Fe cation: histidine 34, histidine 85, aspartate 171, and histidine 175.

The protein belongs to the iron/manganese superoxide dismutase family. As to quaternary structure, homotetramer. Fe cation serves as cofactor.

The protein localises to the cytoplasm. The catalysed reaction is 2 superoxide + 2 H(+) = H2O2 + O2. Destroys superoxide anion radicals which are normally produced within the cells and which are toxic to biological systems. This is Superoxide dismutase [Fe] (sod) from Saccharolobus solfataricus (strain ATCC 35092 / DSM 1617 / JCM 11322 / P2) (Sulfolobus solfataricus).